Here is a 435-residue protein sequence, read N- to C-terminus: Methionine aminopeptidase 2 (435 aa).

A disordered region spans residues 1 to 87 (MAAQVADGVA…TQTKPPRVPV (87 aa)). Basic and acidic residues predominate over residues 10-19 (ADLKLDDTKS). Over residues 20–29 (KPTNGTTQNG) the composition is skewed to polar residues. Residues 32-46 (EHEDSDDDNEGEEGA) are compositionally biased toward acidic residues. A compositionally biased stretch (basic residues) spans 55 to 68 (KKKKKRKPRKKKKA). His-199 is a substrate binding site. Residues Asp-219, Asp-230, and His-299 each contribute to the a divalent metal cation site. His-307 is a binding site for substrate. Glu-332 and Glu-427 together coordinate a divalent metal cation.

The protein belongs to the peptidase M24A family. Methionine aminopeptidase eukaryotic type 2 subfamily. It depends on Co(2+) as a cofactor. Zn(2+) serves as cofactor. The cofactor is Mn(2+). Requires Fe(2+) as cofactor.

It localises to the cytoplasm. The enzyme catalyses Release of N-terminal amino acids, preferentially methionine, from peptides and arylamides.. In terms of biological role, cotranslationally removes the N-terminal methionine from nascent proteins. The N-terminal methionine is often cleaved when the second residue in the primary sequence is small and uncharged (Met-Ala-, Cys, Gly, Pro, Ser, Thr, or Val). This is Methionine aminopeptidase 2 from Phaeosphaeria nodorum (strain SN15 / ATCC MYA-4574 / FGSC 10173) (Glume blotch fungus).